Here is a 378-residue protein sequence, read N- to C-terminus: Erythronate-4-phosphate dehydrogenase (378 aa).

Substrate contacts are provided by serine 45 and threonine 66. Aspartate 146 provides a ligand contact to NAD(+). Arginine 207 is an active-site residue. Aspartate 231 contacts NAD(+). Residue glutamate 236 is part of the active site. Histidine 253 functions as the Proton donor in the catalytic mechanism. Glycine 256 lines the NAD(+) pocket.

The protein belongs to the D-isomer specific 2-hydroxyacid dehydrogenase family. PdxB subfamily. As to quaternary structure, homodimer.

The protein resides in the cytoplasm. It carries out the reaction 4-phospho-D-erythronate + NAD(+) = (R)-3-hydroxy-2-oxo-4-phosphooxybutanoate + NADH + H(+). It functions in the pathway cofactor biosynthesis; pyridoxine 5'-phosphate biosynthesis; pyridoxine 5'-phosphate from D-erythrose 4-phosphate: step 2/5. Catalyzes the oxidation of erythronate-4-phosphate to 3-hydroxy-2-oxo-4-phosphonooxybutanoate. The polypeptide is Erythronate-4-phosphate dehydrogenase (Wigglesworthia glossinidia brevipalpis).